Here is a 489-residue protein sequence, read N- to C-terminus: Cytochrome P450 71A26 (489 aa).

The chain crosses the membrane as a helical span at residues 1-21; sequence MMIMFFLLCSIIFVVTIIIFR. C431 lines the heme pocket.

Belongs to the cytochrome P450 family. The cofactor is heme.

It is found in the membrane. The sequence is that of Cytochrome P450 71A26 (CYP71A26) from Arabidopsis thaliana (Mouse-ear cress).